The sequence spans 318 residues: MDKQNSQMNASHPETNLPVGYPPQYPPTAFQGPPGYSGYPGPQVSYPPPPAGHSGPGPAGFPVPNQPVYNQPVYNQPVGAAGVPWMPAPQPPLNCPPGLEYLSQIDQILIHQQIELLEVLTGFETNNKYEIKNSFGQRVYFAAEDTDCCTRNCCGPSRPFTLRIIDNMGQEVITLERPLRCSSCCCPCCLQEIEIQAPPGVPIGYVIQTWHPCLPKFTIQNEKREDVLKISGPCVVCSCCGDVDFEIKSLDEQCVVGKISKHWTGILREAFTDADNFGIQFPLDLDVKMKAVMIGACFLIDFMFFESTGSQEQKSGVW.

Polar residues predominate over residues 1–14 (MDKQNSQMNASHPE). The segment at 1-64 (MDKQNSQMNA…GPGPAGFPVP (64 aa)) is disordered. The tract at residues 1 to 84 (MDKQNSQMNA…NQPVGAAGVP (84 aa)) is proline-rich domain (PRD). Residues 1-288 (MDKQNSQMNA…IQFPLDLDVK (288 aa)) are Cytoplasmic-facing. The short motif at 18 to 26 (PVGYPPQYP) is the SH3-binding 1 element. Short sequence motifs (PPXY motif) lie at residues 22–25 (PPQY) and 33–36 (PPGY). Residues 31 to 44 (QGPPGYSGYPGPQV) show a composition bias toward low complexity. Residues 42–50 (PQVSYPPPP) carry the SH3-binding 2 motif. A phosphotyrosine; by ABL mark is found at tyrosine 69 and tyrosine 74. The SH3-binding 3 motif lies at 84 to 92 (PWMPAPQPP). The interval 99 to 290 (LEYLSQIDQI…FPLDLDVKMK (192 aa)) is interaction with hepatitis C virus E2 glycoprotein. Residue threonine 161 is modified to Phosphothreonine; by PKC/PRKCD. 5 S-palmitoyl cysteine lipidation sites follow: cysteine 184, cysteine 185, cysteine 186, cysteine 188, and cysteine 189. Residues 257-266 (GKISKHWTGI) carry the Nuclear localization signal motif. Residues 289–305 (MKAVMIGACFLIDFMFF) traverse the membrane as a helical segment. Residues 306 to 318 (ESTGSQEQKSGVW) are Extracellular-facing.

The protein belongs to the phospholipid scramblase family. As to quaternary structure, forms homooligomers in the presence of calcium. Interacts with ABL. Interacts with RELT, RELL1 and RELL2. Interacts with OXSR1 in the presence of RELT. Interacts with TOP2A and TOP2B. Interacts with OCLN. Interacts with TRPC5. Interacts with TRPC1 and TRPC4. Interacts with ILDR1. In terms of assembly, (Microbial infection) Interacts with hepatitis C virus E1 and E2 glycoproteins. (Microbial infection) Interacts with T-cell leukemia virus (HTLV)-1 protein Tax (via N-terminus); this interaction represses Tax homodimerization. As to quaternary structure, (Microbial infection) Interacts with HIV-1 protein Tat; this interaction represses the Tat-dependent transactivation of the HIV-1 long terminal repeat (LTR) and reduces the nuclear translocation of Tat. In terms of assembly, (Microbial infection) Interacts with hepatitis B virus protein HBx; this interaction promotes the proteasomal degradation of HBx. (Microbial infection) Interacts with human cytomegalovirus proteins IE1 and IE2. As to quaternary structure, (Microbial infection) Interacts with Epstein Barr virus (EBV) lytic switch protein BZLF1; this interaction negatively regulates the transcriptional regulatory activity of BZLF1 by preventing the formation of the BZLF1-CBP complex. In terms of assembly, (Microbial infection) Interacts with influenza virus nucleoprotein NP. It depends on Ca(2+) as a cofactor. Requires Mg(2+) as cofactor. The cofactor is Zn(2+). In terms of processing, phosphorylation at Thr-161 by PKC/PKCD increases its phospholipid scramblase activity during both cell stimulation and apoptosis. Phosphorylated by OXSR1 in the presence of RELT. Palmitoylation is required for its phospholipid scramblase activity. Palmitoylation regulates its localization to the cell membrane or the nucleus; trafficking to the cell membrane is dependent upon palmitoylation whereas in the absence of palmitoylation, localizes to the nucleus. As to expression, expressed in platelets, erythrocyte membranes, lymphocytes, spleen, thymus, prostate, testis, uterus, intestine, colon, heart, placenta, lung, liver, kidney and pancreas. Not detected in brain and skeletal muscle.

It localises to the cell membrane. The protein localises to the nucleus. Its subcellular location is the cytoplasm. The protein resides in the perinuclear region. It carries out the reaction a 1,2-diacyl-sn-glycero-3-phosphocholine(in) = a 1,2-diacyl-sn-glycero-3-phosphocholine(out). The enzyme catalyses a 1,2-diacyl-sn-glycero-3-phosphoethanolamine(in) = a 1,2-diacyl-sn-glycero-3-phosphoethanolamine(out). The catalysed reaction is a 1,2-diacyl-sn-glycero-3-phospho-L-serine(in) = a 1,2-diacyl-sn-glycero-3-phospho-L-serine(out). With respect to regulation, activated by Pb(2+) and Hg(2+) ions. Phosphorylation at Thr-161 by PKC/PKCD increases its phospholipid scramblase activity during both cell stimulation and apoptosis. In terms of biological role, catalyzes calcium-induced ATP-independent rapid bidirectional and non-specific movement of phospholipids (lipid scrambling or lipid flip-flop) between the inner and outer leaflet of the plasma membrane resulting in collapse of the phospholipid asymmetry which leads to phosphatidylserine externalization on the cell surface. Mediates calcium-dependent phosphatidylserine externalization and apoptosis in neurons via its association with TRPC5. Also exhibits magnesium-dependent nuclease activity against double-stranded DNA and RNA but not single-stranded DNA and can enhance DNA decatenation mediated by TOP2A. Negatively regulates FcR-mediated phagocytosis in differentiated macrophages. May contribute to cytokine-regulated cell proliferation and differentiation. May play a role in the antiviral response of interferon (IFN) by amplifying and enhancing the IFN response through increased expression of select subset of potent antiviral genes. Inhibits the functions of viral transactivators, including human T-cell leukemia virus (HTLV)-1 protein Tax, human immunodeficiency virus (HIV)-1 Tat, human hepatitis B virus (HBV) HBx, Epstein-Barr virus (EBV) BZLF1 and human cytomegalovirus IE1 and IE2 proteins through direct interactions. Also mediates the inhibition of influenza virus infection by preventing nuclear import of the viral nucleoprotein/NP. Plays a crucial role as a defense factor against SARS-CoV-2 independently of its scramblase activity by directly targeting nascent viral vesicles to prevent virus-membrane fusion and the release of viral RNA into the host-cell cytosol. Functionally, (Microbial infection) Acts as an attachment receptor for HCV. This chain is Phospholipid scramblase 1 (PLSCR1), found in Homo sapiens (Human).